Consider the following 147-residue polypeptide: UPF0306 protein YhbP (147 aa).

Belongs to the UPF0306 family.

This chain is UPF0306 protein YhbP, found in Escherichia coli O6:K15:H31 (strain 536 / UPEC).